The sequence spans 1364 residues: Serine protease SepA autotransporter (1364 aa).

Positions 1–56 are cleaved as a signal peptide; that stretch reads MNKIYYLKYCHITKSLIAVSELARRVTCKSHRRLSRRVILTSVAALSLSSAWPALS. In terms of domain architecture, Peptidase S6 spans 57–307; the sequence is ATVSAEIPYQ…VVTTQDFLGQ (251 aa). Catalysis depends on charge relay system residues H134, D162, and S267. The Autotransporter domain maps to 1098–1364; it reads DTQGDAGVWA…AINANFRYVF (267 aa).

In terms of processing, cleaved to release the mature protein from the outer membrane. Cleavage is performed by an unknown protease.

It is found in the periplasm. The protein resides in the secreted. Its subcellular location is the cell surface. The protein localises to the cell outer membrane. With respect to regulation, inhibited by the serine protease inhibitor PMSF, but not by benzamidine, alpha 1-antitrypsin, alpha 1-antichymotrypsin. Not inhibited by metalloprotease inhibitors such as EDTA and orthophenanthroline. Functionally, major protein secreted in laboratory media showing proteolytic activity. May be involved in invasion and destruction of host intestinal epithelium. The protein is Serine protease SepA autotransporter (sepA) of Shigella flexneri.